The sequence spans 229 residues: UPF0488 protein C8orf33 homolog (229 aa).

Alanine 2 bears the N-acetylalanine mark. Residue arginine 27 is modified to Omega-N-methylarginine. The tract at residues 55 to 101 (SRAHPLGDEGGTASKKQNKKKKTRNRASVANGGEKASEKLAPEEVPL) is disordered. A compositionally biased stretch (basic residues) spans 70–79 (KQNKKKKTRN). Phosphoserine is present on serine 82.

It belongs to the UPF0488 family.

In Pongo abelii (Sumatran orangutan), this protein is UPF0488 protein C8orf33 homolog.